Consider the following 170-residue polypeptide: FMRFamide-like neuropeptides 6 (170 aa).

The signal sequence occupies residues 1 to 19 (MNSRGLILTLGVVIAVAFA). Residue Gln-20 is modified to Pyrrolidone carboxylic acid. Phe-39 carries the phenylalanine amide modification. Positions 42–51 (SDGGNPMEME) are excised as a propeptide. Phe-60 carries the phenylalanine amide modification. Positions 63–81 (RSSGGDEQELVGGDDIDME) are excised as a propeptide. Phe-90 bears the Phenylalanine amide mark. Positions 93-104 (RSGPQEDDMPME) are excised as a propeptide. At Phe-113 the chain carries Phenylalanine amide. Positions 116 to 136 (RSSDMEVIGNEGVDGDAHDLF) are excised as a propeptide. Position 145 is a phenylalanine amide (Phe-145). A propeptide spanning residues 148 to 159 (RSMGEEEDHDMM) is cleaved from the precursor. The segment at 150–170 (MGEEEDHDMMKRKSAYMRFGR) is disordered. Residues 159 to 170 (MKRKSAYMRFGR) show a composition bias toward basic residues. Phe-168 is modified (phenylalanine amide).

It belongs to the FARP (FMRFamide related peptide) family. In terms of tissue distribution, each flp gene is expressed in a distinct set of neurons. Flp-6 is expressed in the ASE sensory neurons, AFD, ASG, PVT and I1 neurons.

Its subcellular location is the secreted. Its function is as follows. FMRFamides and FMRFamide-like peptides are neuropeptides. KSAYMRF-amide has an excitatory effect on dissected pharyngeal myogenic muscle system. This chain is FMRFamide-like neuropeptides 6, found in Caenorhabditis elegans.